The primary structure comprises 276 residues: Natural cytotoxicity triggering receptor 2 (276 aa).

Residues 1 to 21 (MAWRALHPLLLLLLLFPGSQA) form the signal peptide. The Ig-like domain maps to 22 to 120 (QSKAQVLQSV…IYRPSDNSVS (99 aa)). Over 22–192 (QSKAQVLQSV…LRPGPAAPIA (171 aa)) the chain is Extracellular. Intrachain disulfides connect cysteine 40–cysteine 109 and cysteine 55–cysteine 63. 2 stretches are compositionally biased toward polar residues: residues 138-156 (TSWTPRDLVSSQTQTQSCV) and 167-183 (ESPSTIPVPSQPQNSTL). The tract at residues 138–184 (TSWTPRDLVSSQTQTQSCVPPTAGARQAPESPSTIPVPSQPQNSTLR) is disordered. Asparagine 180 carries N-linked (GlcNAc...) asparagine glycosylation. A helical membrane pass occupies residues 193–213 (LVPVFCGLLVAKSLVLSALLV). Residues 214-276 (WWGDIWWKTM…ISDDDDEHTL (63 aa)) lie on the Cytoplasmic side of the membrane.

Belongs to the natural cytotoxicity receptor (NCR) family. As to quaternary structure, interacts with TYROBP/DAP12. Interacts with KMT2E isoform NKp44L. In terms of tissue distribution, selectively expressed by activated NK cells and by in vitro cultured (i.e. activated) TCRg/d lymphoid cells.

It is found in the cell membrane. Its function is as follows. Cytotoxicity-activating receptor that may contribute to the increased efficiency of activated natural killer (NK) cells to mediate tumor cell lysis. This is Natural cytotoxicity triggering receptor 2 (NCR2) from Homo sapiens (Human).